The chain runs to 205 residues: Holliday junction resolvase RecU (205 aa).

A disordered region spans residues 1–26; it reads MIRYPNGKSYQPIQPIGTKKRISGES. Mg(2+)-binding residues include Thr-86, Asp-88, Glu-101, and Gln-120.

It belongs to the RecU family. Mg(2+) is required as a cofactor.

Its subcellular location is the cytoplasm. It catalyses the reaction Endonucleolytic cleavage at a junction such as a reciprocal single-stranded crossover between two homologous DNA duplexes (Holliday junction).. Functionally, endonuclease that resolves Holliday junction intermediates in genetic recombination. Cleaves mobile four-strand junctions by introducing symmetrical nicks in paired strands. Promotes annealing of linear ssDNA with homologous dsDNA. Required for DNA repair, homologous recombination and chromosome segregation. In Bacillus pumilus (strain SAFR-032), this protein is Holliday junction resolvase RecU.